The following is a 2179-amino-acid chain: Genome polyprotein (2179 aa).

Disordered stretches follow at residues 503–531 (FSKD…PTGD), 623–678 (QPQK…YPIQ), 703–738 (RAKK…GDQF), and 753–847 (EPSV…PPKM). 2 stretches are compositionally biased toward polar residues: residues 630–642 (DTPS…QPFH) and 659–678 (TTFA…YPIQ). Over residues 758–770 (SEDTSSQSYISTE) the composition is skewed to polar residues. A compositionally biased stretch (low complexity) spans 783-806 (SEESTQLSQLSSSSNDSPENNENT). A compositionally biased stretch (acidic residues) spans 819-831 (EISEVEDEVDGMT). Residues 1112-1125 (CFTCGKIGHFSRNC) form a CCHC-type zinc finger. Residue Asp-1226 is the For protease activity; shared with dimeric partner of the active site. The 183-residue stretch at 1409 to 1591 (QQFDLIEPSD…NKIQFLGMDF (183 aa)) folds into the Reverse transcriptase domain. Mg(2+) contacts are provided by Asp-1479, Asp-1542, and Asp-1543. Disordered regions lie at residues 1822 to 1848 (QRRT…KLSH), 2114 to 2144 (NIVK…KNKC), and 2160 to 2179 (YSTK…EPCV). Residues 1827-1840 (SSSTKSKADSSQST) are compositionally biased toward low complexity. The segment covering 2120–2144 (PRKRKGKAKSRSSTRSEKRRAKNKC) has biased composition (basic residues). Polar residues predominate over residues 2162-2179 (TKPSTPSWTQDSSSEPCV).

Belongs to the Petuviruses genome polyprotein family.

It carries out the reaction DNA(n) + a 2'-deoxyribonucleoside 5'-triphosphate = DNA(n+1) + diphosphate. In terms of biological role, encodes presumably for at least four polypeptides: Movement protein (MP), capsid protein (CP), Protease (PR), and reverse transcriptase (RT). This is Genome polyprotein from Petunia vein clearing virus (isolate Shepherd) (PVCV).